The primary structure comprises 259 residues: Light-harvesting complex stress-related protein 3.1, chloroplastic (259 aa).

The N-terminal 45 residues, 1-45, are a transit peptide targeting the chloroplast; the sequence is MLANVVSRKASGLRQTPARATVAVKSVSGRRTTAAEPQTAAPVAA. Tyrosine 51 provides a ligand contact to chlorophyll b. The chlorophyll a site is built by phenylalanine 66, glutamate 87, and histidine 90. Arginine 92 contacts chlorophyll b. The chain crosses the membrane as a helical span at residues 93–113; that stretch reads VAMLAALGFVVGEQLQDFPLF. Position 130 (glutamine 130) interacts with chlorophyll a. Residues 137-157 form a helical membrane-spanning segment; sequence EPLLIAIGVAESYRVAVGWAT. The chlorophyll b site is built by glutamate 147 and arginine 150. The chlorophyll a site is built by lysine 196, glutamate 197, asparagine 200, arginine 202, and glutamine 214. Residues 203–223 traverse the membrane as a helical segment; sequence LAMIAIAAFVAQELVEQTEIF.

Belongs to the light-harvesting chlorophyll a/b-binding (LHC) protein family. In terms of assembly, interacts with the photosystem II-light-harvesting complex II (PSII-LHCII) supercomplex to form PSII-LHCII-LHCSR3 supercomplex.

The protein resides in the plastid. Its subcellular location is the chloroplast thylakoid membrane. Required for non-photochemical quenching (NPQ), a mechanism that converts and dissipates the harmful excess absorbed light energy into heat and protect the photosynthetic apparatus from photo-oxidative damage. NPQ includes dissipating excess light energy to heat (qE) and the reversible coupling of LHCII to photosystems (state transitions or qT), which are considered separate NPQ mechanisms. Is responsible for most of the excess light energy to heat dissipation (qE), also known as energy-dependent chlorophyll fluorescence quenching activity of chlorophyll excited states. Involved in a de-coupling and re-coupling of energy transfer to photosystem II (PSII) during qT. Binds chlorophyll a and b. Is able to sense luminal acidification of the thylakoid membranes, which occurs along with elevated electron flow caused by excess light. Establishes interactions with photosystem II (PSII) antenna components upon lumen acidification, and protonation of lumen-exposed, negatively charged residues both in LHCSR3 and in PSII antenna components. Mediates excitation energy transfer from light-harvesting complex II (LHCII) to photosystem I (PSI), rather than photosystem II (PSII), at low pH, which mimics the acidified lumen of the thylakoid membranes in high light-exposed chloroplasts. Activates PSI-dependent fluorescence quenching in addition to dissipating excitation energy in LHCII to avoid photooxidative stress under excess light. Contributes with PGRL1 to the regulation of electron flow upstream of photosystem I (PSI), and limits the accumulation of electrons on the PSI acceptor side, thus avoiding PSI photoinhibition. The protein is Light-harvesting complex stress-related protein 3.1, chloroplastic of Chlamydomonas reinhardtii (Chlamydomonas smithii).